A 480-amino-acid chain; its full sequence is Proline--tRNA ligase (480 aa).

It belongs to the class-II aminoacyl-tRNA synthetase family. ProS type 3 subfamily. As to quaternary structure, homodimer.

Its subcellular location is the cytoplasm. The enzyme catalyses tRNA(Pro) + L-proline + ATP = L-prolyl-tRNA(Pro) + AMP + diphosphate. Its function is as follows. Catalyzes the attachment of proline to tRNA(Pro) in a two-step reaction: proline is first activated by ATP to form Pro-AMP and then transferred to the acceptor end of tRNA(Pro). This Metallosphaera sedula (strain ATCC 51363 / DSM 5348 / JCM 9185 / NBRC 15509 / TH2) protein is Proline--tRNA ligase.